Consider the following 479-residue polypeptide: BRAP2 RING ZnF UBP domain-containing protein 2 (479 aa).

The segment at 167 to 207 (CPVCLERLDQDTGGILTTMCNHSFHCSCISNWPDSSCPVCR) adopts an RING-type; atypical zinc-finger fold. The segment at 201–294 (SSCPVCRYCQ…GKLVELNSHG (94 aa)) adopts a UBP-type; degenerate zinc-finger fold. C218, C221, C230, C233, C238, H245, H249, and H255 together coordinate Zn(2+). Residues 328-442 (NELLQAQLEN…MAQMDGESEV (115 aa)) are a coiled coil. The disordered stretch occupies residues 434–479 (AQMDGESEVSETKEVQDATVSTTNTSSSGAGNVIHANKKKSNRRKG). Residues 451–466 (ATVSTTNTSSSGAGNV) are compositionally biased toward low complexity. The span at 469–479 (ANKKKSNRRKG) shows a compositional bias: basic residues.

Component of the heteromeric E3 ligase complex made of BRIZ1 and BRIZ2. Forms heterooligomers with BRIZ1 via coiled-coil domains.

The catalysed reaction is S-ubiquitinyl-[E2 ubiquitin-conjugating enzyme]-L-cysteine + [acceptor protein]-L-lysine = [E2 ubiquitin-conjugating enzyme]-L-cysteine + N(6)-ubiquitinyl-[acceptor protein]-L-lysine.. The protein operates within protein modification; protein ubiquitination. In terms of biological role, RING-type ubiquitin E3 ligase that binds ubiquitin and is required for seed germination and post-germination growth. In Arabidopsis thaliana (Mouse-ear cress), this protein is BRAP2 RING ZnF UBP domain-containing protein 2.